The chain runs to 125 residues: Large ribosomal subunit protein uL22 (125 aa).

Belongs to the universal ribosomal protein uL22 family. Part of the 50S ribosomal subunit.

Its function is as follows. This protein binds specifically to 23S rRNA; its binding is stimulated by other ribosomal proteins, e.g. L4, L17, and L20. It is important during the early stages of 50S assembly. It makes multiple contacts with different domains of the 23S rRNA in the assembled 50S subunit and ribosome. Functionally, the globular domain of the protein is located near the polypeptide exit tunnel on the outside of the subunit, while an extended beta-hairpin is found that lines the wall of the exit tunnel in the center of the 70S ribosome. This Thermobifida fusca (strain YX) protein is Large ribosomal subunit protein uL22.